The sequence spans 473 residues: 3-isopropylmalate dehydratase large subunit (473 aa).

The [4Fe-4S] cluster site is built by cysteine 348, cysteine 408, and cysteine 411. The disordered stretch occupies residues 421-440 (GDEASASSSNRNFIGRQGSK).

This sequence belongs to the aconitase/IPM isomerase family. LeuC type 1 subfamily. As to quaternary structure, heterodimer of LeuC and LeuD. It depends on [4Fe-4S] cluster as a cofactor.

The enzyme catalyses (2R,3S)-3-isopropylmalate = (2S)-2-isopropylmalate. It participates in amino-acid biosynthesis; L-leucine biosynthesis; L-leucine from 3-methyl-2-oxobutanoate: step 2/4. Catalyzes the isomerization between 2-isopropylmalate and 3-isopropylmalate, via the formation of 2-isopropylmaleate. In Haloferax volcanii (strain ATCC 29605 / DSM 3757 / JCM 8879 / NBRC 14742 / NCIMB 2012 / VKM B-1768 / DS2) (Halobacterium volcanii), this protein is 3-isopropylmalate dehydratase large subunit.